The following is a 414-amino-acid chain: Inositol-tetrakisphosphate 1-kinase (414 aa).

Lysine 18 provides a ligand contact to 1D-myo-inositol 1,3,4-trisphosphate. Positions 106 and 157 each coordinate ATP. The region spanning 117–325 (EAYMEDDRIC…IATVLQGQST (209 aa)) is the ATP-grasp domain. The 1D-myo-inositol 1,3,4-trisphosphate site is built by histidine 167 and lysine 199. Residues 188 to 199 (QNFINHNAVLYK), serine 214, serine 232, and serine 236 each bind ATP. 3 residues coordinate Mg(2+): aspartate 281, aspartate 295, and asparagine 297. Asparagine 297 contacts 1D-myo-inositol 1,3,4-trisphosphate. N6-acetyllysine; by EP300 and CREBBP is present on residues lysine 340 and lysine 383. A Phosphoserine modification is found at serine 396. N6-acetyllysine; by EP300 and CREBBP is present on lysine 410.

Belongs to the ITPK1 family. Monomer. Interacts with GPS1/COPS1. Mg(2+) serves as cofactor. Acetylation by EP300 and CREBBP destabilizes ITPK1, and down-regulates enzymatic activity. Deacetylated by SIRT1. As to expression, expressed in brain &gt; heart &gt; skeletal muscle = kidney = pancreas = liver = placenta &gt; lung. In brain, it is expressed in cerebellum, cerebral cortex, medulla, spinal cord, occipital lobe, frontal lobe, temporal lobe and putamen.

The catalysed reaction is 1D-myo-inositol 3,4,5,6-tetrakisphosphate + ATP = 1D-myo-inositol 1,3,4,5,6-pentakisphosphate + ADP + H(+). It catalyses the reaction 1D-myo-inositol 1,3,4-trisphosphate + ATP = 1D-myo-inositol 1,3,4,5-tetrakisphosphate + ADP + H(+). It carries out the reaction 1D-myo-inositol 1,3,4-trisphosphate + ATP = 1D-myo-inositol 1,3,4,6-tetrakisphosphate + ADP + H(+). The enzyme catalyses 1D-myo-inositol 3,4,6-trisphosphate + ATP = 1D-myo-inositol 1,3,4,6-tetrakisphosphate + ADP + H(+). The catalysed reaction is 1D-myo-inositol 1,3,4-trisphosphate + 1D-myo-inositol 1,3,4,5,6-pentakisphosphate = 1D-myo-inositol 3,4,5,6-tetrakisphosphate + 1D-myo-inositol 1,3,4,6-tetrakisphosphate. It catalyses the reaction 1D-myo-inositol 1,3,4-trisphosphate + 1D-myo-inositol 1,3,4,5,6-pentakisphosphate = 1D-myo-inositol 3,4,5,6-tetrakisphosphate + 1D-myo-inositol 1,3,4,5-tetrakisphosphate. Its function is as follows. Kinase that can phosphorylate various inositol polyphosphate such as Ins(3,4,5,6)P4 or Ins(1,3,4)P3. Phosphorylates Ins(3,4,5,6)P4 at position 1 to form Ins(1,3,4,5,6)P5. This reaction is thought to have regulatory importance, since Ins(3,4,5,6)P4 is an inhibitor of plasma membrane Ca(2+)-activated Cl(-) channels, while Ins(1,3,4,5,6)P5 is not. Also phosphorylates Ins(1,3,4)P3 on O-5 and O-6 to form Ins(1,3,4,6)P4, an essential molecule in the hexakisphosphate (InsP6) pathway. Also acts as an inositol polyphosphate phosphatase that dephosphorylates Ins(1,3,4,5)P4 and Ins(1,3,4,6)P4 to Ins(1,3,4)P3, and Ins(1,3,4,5,6)P5 to Ins(3,4,5,6)P4. May also act as an isomerase that interconverts the inositol tetrakisphosphate isomers Ins(1,3,4,5)P4 and Ins(1,3,4,6)P4 in the presence of ADP and magnesium. Probably acts as the rate-limiting enzyme of the InsP6 pathway. Modifies TNF-alpha-induced apoptosis by interfering with the activation of TNFRSF1A-associated death domain. Plays an important role in MLKL-mediated necroptosis. Produces highly phosphorylated inositol phosphates such as inositolhexakisphosphate (InsP6) which bind to MLKL mediating the release of an N-terminal auto-inhibitory region leading to its activation. Essential for activated phospho-MLKL to oligomerize and localize to the cell membrane during necroptosis. This is Inositol-tetrakisphosphate 1-kinase from Homo sapiens (Human).